A 936-amino-acid polypeptide reads, in one-letter code: Protein translocase subunit SecA (936 aa).

Residues Gln90, 108 to 112 (GEGKT), and Asp499 each bind ATP.

Belongs to the SecA family. In terms of assembly, monomer and homodimer. Part of the essential Sec protein translocation apparatus which comprises SecA, SecYEG and auxiliary proteins SecDF. Other proteins may also be involved.

Its subcellular location is the cell inner membrane. It is found in the cellular thylakoid membrane. The protein resides in the cytoplasm. It catalyses the reaction ATP + H2O + cellular proteinSide 1 = ADP + phosphate + cellular proteinSide 2.. Its function is as follows. Part of the Sec protein translocase complex. Interacts with the SecYEG preprotein conducting channel. Has a central role in coupling the hydrolysis of ATP to the transfer of proteins into and across the cell membrane, serving as an ATP-driven molecular motor driving the stepwise translocation of polypeptide chains across the membrane. Probably participates in protein translocation into and across both the cytoplasmic and thylakoid membranes in cyanobacterial cells. The polypeptide is Protein translocase subunit SecA (Trichodesmium erythraeum (strain IMS101)).